A 594-amino-acid polypeptide reads, in one-letter code: Aspartate--tRNA(Asp/Asn) ligase (594 aa).

Residue Glu-175 coordinates L-aspartate. Residues 199–202 form an aspartate region; sequence QLFK. Arg-221 contacts L-aspartate. ATP-binding positions include 221–223 and Gln-230; that span reads RDE. Residue His-446 participates in L-aspartate binding. Position 492 (Glu-492) interacts with ATP. Arg-499 provides a ligand contact to L-aspartate. Residue 544–547 participates in ATP binding; the sequence is GFDR.

Belongs to the class-II aminoacyl-tRNA synthetase family. Type 1 subfamily. As to quaternary structure, homodimer.

Its subcellular location is the cytoplasm. The enzyme catalyses tRNA(Asx) + L-aspartate + ATP = L-aspartyl-tRNA(Asx) + AMP + diphosphate. Its function is as follows. Aspartyl-tRNA synthetase with relaxed tRNA specificity since it is able to aspartylate not only its cognate tRNA(Asp) but also tRNA(Asn). Reaction proceeds in two steps: L-aspartate is first activated by ATP to form Asp-AMP and then transferred to the acceptor end of tRNA(Asp/Asn). The polypeptide is Aspartate--tRNA(Asp/Asn) ligase (Hydrogenobaculum sp. (strain Y04AAS1)).